We begin with the raw amino-acid sequence, 404 residues long: WD repeat and SOCS box-containing protein 2 (404 aa).

WD repeat units follow at residues 16 to 55, 81 to 140, 144 to 183, 188 to 226, 230 to 268, 283 to 322, and 325 to 362; these read GRPH…LIPW, GSPK…IWEV, LLLL…IWDL, KQIQ…LWSM, TLIR…MWDP, DPAM…IWAL, and KTPI…FWTA. Residues 68-87 form a disordered region; that stretch reads AKSRSSKNETKGRGSPKEKT. Residues 356–404 form the SOCS box domain; that stretch reads HVQFWTAPRVLSSLKHLCRKALRSFLTTYQVLALPIPKKMKEFLTYRTF.

It functions in the pathway protein modification; protein ubiquitination. May be a substrate-recognition component of a SCF-like ECS (Elongin-Cullin-SOCS-box protein) E3 ubiquitin ligase complex which mediates the ubiquitination and subsequent proteasomal degradation of target proteins. The polypeptide is WD repeat and SOCS box-containing protein 2 (WSB2) (Homo sapiens (Human)).